A 420-amino-acid polypeptide reads, in one-letter code: Acetyl-CoA acetyltransferase B, mitochondrial (420 aa).

A mitochondrion-targeting transit peptide spans 1–33 (MAFCGPRTAARLSHSTRALHYTHRSFASPRTLN). The active-site Acyl-thioester intermediate is the cysteine 119. Residues tyrosine 212, 251–253 (RVD), and lysine 256 each bind CoA. K(+) is bound at residue tyrosine 212. K(+)-binding residues include alanine 273 and alanine 274. Serine 277 lines the CoA pocket. K(+) is bound at residue valine 374. Cysteine 406 serves as the catalytic Proton donor/acceptor.

It belongs to the thiolase-like superfamily. Thiolase family. Homotetramer.

The protein localises to the mitochondrion. It catalyses the reaction 2 acetyl-CoA = acetoacetyl-CoA + CoA. The catalysed reaction is propanoyl-CoA + acetyl-CoA = 2-methyl-3-oxobutanoyl-CoA + CoA. The protein operates within lipid metabolism; fatty acid beta-oxidation. Functionally, this is one of the enzymes that catalyzes the last step of the mitochondrial beta-oxidation pathway, an aerobic process breaking down fatty acids into acetyl-CoA. Using free coenzyme A/CoA, catalyzes the thiolytic cleavage of medium- to long-chain 3-oxoacyl-CoAs into acetyl-CoA and a fatty acyl-CoA shortened by two carbon atoms. The activity of the enzyme is reversible and it can also catalyze the condensation of two acetyl-CoA molecules into acetoacetyl-CoA. Thereby, it plays a major role in ketone body metabolism. This is Acetyl-CoA acetyltransferase B, mitochondrial (acat1-b) from Xenopus laevis (African clawed frog).